Reading from the N-terminus, the 309-residue chain is Dihydroorotate dehydrogenase B (NAD(+)), catalytic subunit (309 aa).

FMN is bound by residues Ser-21 and 45-46 (KA). Residues Lys-45 and 69–73 (NAIGL) each bind substrate. FMN contacts are provided by Asn-99 and Asn-127. Residue Asn-127 participates in substrate binding. The active-site Nucleophile is the Cys-130. Residues Lys-165 and Ile-191 each contribute to the FMN site. Position 192–193 (192–193 (NT)) interacts with substrate. Residues Gly-217, 243–244 (GG), and 265–266 (GT) each bind FMN.

The protein belongs to the dihydroorotate dehydrogenase family. Type 1 subfamily. In terms of assembly, heterotetramer of 2 PyrK and 2 PyrD type B subunits. Requires FMN as cofactor.

The protein resides in the cytoplasm. It carries out the reaction (S)-dihydroorotate + NAD(+) = orotate + NADH + H(+). The protein operates within pyrimidine metabolism; UMP biosynthesis via de novo pathway; orotate from (S)-dihydroorotate (NAD(+) route): step 1/1. Catalyzes the conversion of dihydroorotate to orotate with NAD(+) as electron acceptor. The polypeptide is Dihydroorotate dehydrogenase B (NAD(+)), catalytic subunit (pyrD) (Bacillus cereus (strain AH187)).